The sequence spans 62 residues: Photosystem II reaction center protein H (62 aa).

Residues 30–50 traverse the membrane as a helical segment; the sequence is PVMAGIGFMLLIFLVTILQIY.

It belongs to the PsbH family. PSII is composed of 1 copy each of membrane proteins PsbA, PsbB, PsbC, PsbD, PsbE, PsbF, PsbH, PsbI, PsbJ, PsbK, PsbL, PsbM, PsbT, PsbX, PsbY, Psb30/Ycf12, peripheral proteins PsbO, CyanoQ (PsbQ), PsbU, PsbV and a large number of cofactors. It forms dimeric complexes.

Its subcellular location is the cellular thylakoid membrane. Its function is as follows. One of the components of the core complex of photosystem II (PSII), required for its stability and/or assembly. PSII is a light-driven water:plastoquinone oxidoreductase that uses light energy to abstract electrons from H(2)O, generating O(2) and a proton gradient subsequently used for ATP formation. It consists of a core antenna complex that captures photons, and an electron transfer chain that converts photonic excitation into a charge separation. In Prochlorococcus marinus (strain MIT 9303), this protein is Photosystem II reaction center protein H.